The chain runs to 145 residues: Oocyte zinc finger protein XlCOF8.4I (145 aa).

The tract at residues 1 to 25 (HKREADFCSKGNLTNPEISPVEHYP) is disordered. A C2H2-type zinc finger spans residues 123-145 (LSCSECGKCFSTYHVLARHQKTH).

It belongs to the krueppel C2H2-type zinc-finger protein family.

The protein resides in the nucleus. Functionally, may be involved in transcriptional regulation. The protein is Oocyte zinc finger protein XlCOF8.4I of Xenopus laevis (African clawed frog).